A 100-amino-acid polypeptide reads, in one-letter code: Urease subunit gamma (100 aa).

This sequence belongs to the urease gamma subunit family. In terms of assembly, heterotrimer of UreA (gamma), UreB (beta) and UreC (alpha) subunits. Three heterotrimers associate to form the active enzyme.

It localises to the cytoplasm. It carries out the reaction urea + 2 H2O + H(+) = hydrogencarbonate + 2 NH4(+). Its pathway is nitrogen metabolism; urea degradation; CO(2) and NH(3) from urea (urease route): step 1/1. In Synechococcus sp. (strain CC9605), this protein is Urease subunit gamma.